The primary structure comprises 718 residues: SANT and BTB domain regulator of class switch recombination (718 aa).

Residues 21–59 enclose the SANT domain; it reads DMILYPLIGIPQTINWETVARLVPGLTPKECVKRFDELK. One can recognise a BTB domain in the interval 147–255; sequence MVIHVCDEAK…QCIQYCHKNM (109 aa). Residues 555–576 show a composition bias toward acidic residues; sequence SEEEEYTTGSEVTEDEVGDEEE. Disordered stretches follow at residues 555 to 622 and 690 to 718; these read SEEE…SPFV and RASVPVTARQNSSDKNQRSKSRFGQGRPA. The segment covering 580–595 has biased composition (basic residues); that stretch reads KQRKKEKPKKFTKPPK. Over residues 604-615 the composition is skewed to basic and acidic residues; that stretch reads QKKEKTLEKSTS.

This sequence belongs to the KIAA1841 family. In terms of assembly, homodimer. Interacts (via the BTB domain) with HDAC1 and NCOR2.

In terms of biological role, negatively regulates class switch recombination or isotype switching in splenic B-cells. This is SANT and BTB domain regulator of class switch recombination from Mus musculus (Mouse).